Here is a 296-residue protein sequence, read N- to C-terminus: Polyadenylate-binding protein 2 (296 aa).

The disordered stretch occupies residues 1–102; it reads MAAVSSAASL…EEEPGELTGD (102 aa). Gly residues-rich tracts occupy residues 19 to 31 and 71 to 82; these read LRGGAGPSGGGQD and GRGGSGGGGAGG. A compositionally biased stretch (acidic residues) spans 84–97; the sequence is EELEDEELEEEEPG. A coiled-coil region spans residues 107 to 141; sequence DPELEAIKARVREMEEEAEKLKELQNEVEKQMNMS. The necessary for homooligomerization stretch occupies residues 146–296; it reads NAGPVIMSIE…ARVTSWYTPY (151 aa). The RRM domain maps to 163-240; the sequence is RSIYVGNVDY…RQIKVVPKRT (78 aa).

In terms of assembly, monomer and homooligomer. Binds RNA as a monomer and oligomerizes when bound to poly(A).

The protein resides in the nucleus. It localises to the cytoplasm. In terms of biological role, involved in the 3'-end formation of mRNA precursors (pre-mRNA) by the addition of a poly(A) tail of 200-250 nt to the upstream cleavage product. Stimulates poly(A) polymerase (PAPOLA) conferring processivity on the poly(A) tail elongation reaction and also controls the poly(A) tail length. Increases the affinity of poly(A) polymerase for RNA. Binds to poly(A) and to poly(G) with high affinity. May protect the poly(A) tail from degradation. The protein is Polyadenylate-binding protein 2 of Xenopus tropicalis (Western clawed frog).